The sequence spans 294 residues: Nucleotide-binding protein CLD_1131 (294 aa).

8–15 (GLSGAGKT) provides a ligand contact to ATP. Residue 59-62 (DIRG) coordinates GTP.

It belongs to the RapZ-like family.

In terms of biological role, displays ATPase and GTPase activities. The sequence is that of Nucleotide-binding protein CLD_1131 from Clostridium botulinum (strain Okra / Type B1).